We begin with the raw amino-acid sequence, 370 residues long: NSFL1 cofactor p47 (370 aa).

Positions 54–73 (SQATPSSVSRGTAPSDNRVT) are disordered. Phosphoserine occurs at positions 74, 102, and 114. Disordered stretches follow at residues 80 to 116 (HDQD…KSPN) and 138 to 157 (TKSP…GYRL). The Nuclear localization signal signature appears at 109 to 115 (PPRKKSP). A Phosphoserine; by CDK1 modification is found at Ser-140. The residue at position 167 (Tyr-167) is a Phosphotyrosine. Positions 172-175 (RRRH) match the Nuclear localization signal motif. Phosphoserine is present on residues Ser-176, Ser-192, and Ser-272. In terms of domain architecture, SEP spans 179-244 (DVHVVLKLWK…MEDHRDEDFV (66 aa)). Positions 291–368 (EAEPTTNIQI…NLLNAVIVQR (78 aa)) constitute a UBX domain.

Belongs to the NSFL1C family. In terms of assembly, part of a ternary complex containing STX5A, NSFL1C and VCP. NSFL1C forms a homotrimer that binds to one end of a VCP homohexamer. The complex binds to membranes enriched in phosphatidylethanolamine-containing lipids and promotes Golgi membrane fusion. Interaction with VCIP135 leads to dissociation of the complex via ATP hydrolysis by VCP. Binds ubiquitin and mono-ubiquitinated proteins via its N-terminal UBA-like domain when bound to VCP. Phosphorylated during mitosis. Phosphorylation inhibits interaction with Golgi membranes and is required for the fragmentation of the Golgi stacks during mitosis. Highly expressed in heart, brain, spleen, lung, liver, muscle, kidney and testis.

It is found in the nucleus. Its subcellular location is the golgi apparatus. The protein resides in the golgi stack. The protein localises to the chromosome. It localises to the cytoplasm. It is found in the cytoskeleton. Its subcellular location is the microtubule organizing center. The protein resides in the centrosome. Functionally, reduces the ATPase activity of VCP. Necessary for the fragmentation of Golgi stacks during mitosis and for VCP-mediated reassembly of Golgi stacks after mitosis. May play a role in VCP-mediated formation of transitional endoplasmic reticulum (tER). Inhibits the activity of CTSL (in vitro). Together with UBXN2B/p37, regulates the centrosomal levels of kinase AURKA/Aurora A during mitotic progression by promoting AURKA removal from centrosomes in prophase. Also, regulates spindle orientation during mitosis. In Rattus norvegicus (Rat), this protein is NSFL1 cofactor p47 (Nsfl1c).